A 513-amino-acid chain; its full sequence is MATLSSYDHFIFTALAFFISGLIFFLKQKSKSKKFNLPPGPPGWPIVGNLFQVARSGKPFFEYVNDVRLKYGSIFTLKMGTRTMIILTDAKLVHEAMIQKGATYATRPPENPTRTIFSENKFTVNAATYGPVWKSLRRNMVQNMLSSTRLKEFRSVRDNAMDKLINRLKDEAEKNNGVVWVLKDARFAVFCILVAMCFGLEMDEETVERIDQVMKSVLITLDPRIDDYLPILSPFFSKQRKKALEVRREQVEFLVPIIEQRRRAIQNPGSDHTATTFSYLDTLFDLKVEGKKSAPSDAELVSLCSEFLNGGTDTTATAVEWGIAQLIANPNVQTKLYEEIKRTVGEKKVDEKDVEKMPYLHAVVKELLRKHPPTHFVLTHAVTEPTTLGGYDIPIDANVEVYTPAIAEDPKNWLNPEKFDPERFISGGEEADITGVTGVKMMPFGVGRRICPGLAMATVHIHLMMARMVQEFEWGAYPPEKKMDFTGKWEFTVVMKESLRATIKPRGGEKVKL.

Residue cysteine 451 coordinates heme.

Belongs to the cytochrome P450 family. Heme serves as cofactor.

This chain is Cytochrome P450 77A3 (CYP77A3), found in Glycine max (Soybean).